Reading from the N-terminus, the 325-residue chain is Glycerol-3-phosphate dehydrogenase [NAD(P)+] (325 aa).

Residues Ser14, Phe15, Arg35, and Lys109 each coordinate NADPH. The sn-glycerol 3-phosphate site is built by Lys109 and Gly137. Residue Ala141 participates in NADPH binding. Sn-glycerol 3-phosphate is bound by residues Lys192, Asp247, Ser257, Arg258, and Asn259. Residue Lys192 is the Proton acceptor of the active site. Position 258 (Arg258) interacts with NADPH. The NADPH site is built by Leu282 and Glu284.

Belongs to the NAD-dependent glycerol-3-phosphate dehydrogenase family.

The protein localises to the cytoplasm. It catalyses the reaction sn-glycerol 3-phosphate + NAD(+) = dihydroxyacetone phosphate + NADH + H(+). The enzyme catalyses sn-glycerol 3-phosphate + NADP(+) = dihydroxyacetone phosphate + NADPH + H(+). It participates in membrane lipid metabolism; glycerophospholipid metabolism. Its function is as follows. Catalyzes the reduction of the glycolytic intermediate dihydroxyacetone phosphate (DHAP) to sn-glycerol 3-phosphate (G3P), the key precursor for phospholipid synthesis. The protein is Glycerol-3-phosphate dehydrogenase [NAD(P)+] of Rickettsia conorii (strain ATCC VR-613 / Malish 7).